The chain runs to 261 residues: Imidazole glycerol phosphate synthase subunit HisF (261 aa).

Active-site residues include aspartate 16 and aspartate 135.

The protein belongs to the HisA/HisF family. As to quaternary structure, heterodimer of HisH and HisF.

It is found in the cytoplasm. It catalyses the reaction 5-[(5-phospho-1-deoxy-D-ribulos-1-ylimino)methylamino]-1-(5-phospho-beta-D-ribosyl)imidazole-4-carboxamide + L-glutamine = D-erythro-1-(imidazol-4-yl)glycerol 3-phosphate + 5-amino-1-(5-phospho-beta-D-ribosyl)imidazole-4-carboxamide + L-glutamate + H(+). The protein operates within amino-acid biosynthesis; L-histidine biosynthesis; L-histidine from 5-phospho-alpha-D-ribose 1-diphosphate: step 5/9. Its function is as follows. IGPS catalyzes the conversion of PRFAR and glutamine to IGP, AICAR and glutamate. The HisF subunit catalyzes the cyclization activity that produces IGP and AICAR from PRFAR using the ammonia provided by the HisH subunit. The protein is Imidazole glycerol phosphate synthase subunit HisF of Mycolicibacterium vanbaalenii (strain DSM 7251 / JCM 13017 / BCRC 16820 / KCTC 9966 / NRRL B-24157 / PYR-1) (Mycobacterium vanbaalenii).